A 644-amino-acid polypeptide reads, in one-letter code: Exoribonuclease 2 (644 aa).

One can recognise an RNB domain in the interval 189 to 516 (RQDLTALNFV…NHRLLKAVIK (328 aa)). Residues 561–643 (NTRFAAEIID…ETRSIIARPA (83 aa)) form the S1 motif domain.

It belongs to the RNR ribonuclease family. RNase II subfamily.

The protein localises to the cytoplasm. It catalyses the reaction Exonucleolytic cleavage in the 3'- to 5'-direction to yield nucleoside 5'-phosphates.. Its function is as follows. Involved in mRNA degradation. Hydrolyzes single-stranded polyribonucleotides processively in the 3' to 5' direction. This chain is Exoribonuclease 2, found in Salmonella paratyphi B (strain ATCC BAA-1250 / SPB7).